The primary structure comprises 302 residues: Sulfate adenylyltransferase subunit 2 (302 aa).

This sequence belongs to the PAPS reductase family. CysD subfamily. As to quaternary structure, heterodimer composed of CysD, the smaller subunit, and CysN.

It carries out the reaction sulfate + ATP + H(+) = adenosine 5'-phosphosulfate + diphosphate. The protein operates within sulfur metabolism; hydrogen sulfide biosynthesis; sulfite from sulfate: step 1/3. With CysN forms the ATP sulfurylase (ATPS) that catalyzes the adenylation of sulfate producing adenosine 5'-phosphosulfate (APS) and diphosphate, the first enzymatic step in sulfur assimilation pathway. APS synthesis involves the formation of a high-energy phosphoric-sulfuric acid anhydride bond driven by GTP hydrolysis by CysN coupled to ATP hydrolysis by CysD. In Methylococcus capsulatus (strain ATCC 33009 / NCIMB 11132 / Bath), this protein is Sulfate adenylyltransferase subunit 2.